A 68-amino-acid polypeptide reads, in one-letter code: uncharacterized protein (68 aa).

This is an uncharacterized protein from Enterobacteria phage T4 (Bacteriophage T4).